Here is a 197-residue protein sequence, read N- to C-terminus: Outer-membrane lipoprotein LolB (197 aa).

The N-terminal stretch at 1–20 (MNRSRRLALFCLGAPLLLQA) is a signal peptide. C21 carries N-palmitoyl cysteine lipidation. The S-diacylglycerol cysteine moiety is linked to residue C21.

The protein belongs to the LolB family. As to quaternary structure, monomer.

It is found in the cell outer membrane. Plays a critical role in the incorporation of lipoproteins in the outer membrane after they are released by the LolA protein. This is Outer-membrane lipoprotein LolB from Cupriavidus necator (strain ATCC 17699 / DSM 428 / KCTC 22496 / NCIMB 10442 / H16 / Stanier 337) (Ralstonia eutropha).